A 119-amino-acid chain; its full sequence is MESRMEGDVYSGFGERYQMDGKLLQNFQKSFVQVQDILDQNRLLINEINQNHESKQADHLGRNVGLIRELNNNIRTVASLYGDLSHSFARSVDASSEGESTGTLKSDGKANNQKRFRSG.

Residues 91-119 (SVDASSEGESTGTLKSDGKANNQKRFRSG) are disordered. Residues 93–111 (DASSEGESTGTLKSDGKAN) are compositionally biased toward polar residues.

This sequence belongs to the EARLY FLOWERING 4 family. In terms of assembly, homodimer.

The protein localises to the nucleus. Component of the central CCA1/LHY-TOC1 feedback loop in the circadian clock that promotes clock accuracy and is required for sustained rhythms in the absence of daily light/dark cycles. In Arabidopsis thaliana (Mouse-ear cress), this protein is Protein ELF4-LIKE 2 (EFL2).